The sequence spans 252 residues: Imidazole glycerol phosphate synthase subunit HisF (252 aa).

Active-site residues include aspartate 11 and aspartate 130.

The protein belongs to the HisA/HisF family. Heterodimer of HisH and HisF.

Its subcellular location is the cytoplasm. The enzyme catalyses 5-[(5-phospho-1-deoxy-D-ribulos-1-ylimino)methylamino]-1-(5-phospho-beta-D-ribosyl)imidazole-4-carboxamide + L-glutamine = D-erythro-1-(imidazol-4-yl)glycerol 3-phosphate + 5-amino-1-(5-phospho-beta-D-ribosyl)imidazole-4-carboxamide + L-glutamate + H(+). It functions in the pathway amino-acid biosynthesis; L-histidine biosynthesis; L-histidine from 5-phospho-alpha-D-ribose 1-diphosphate: step 5/9. In terms of biological role, IGPS catalyzes the conversion of PRFAR and glutamine to IGP, AICAR and glutamate. The HisF subunit catalyzes the cyclization activity that produces IGP and AICAR from PRFAR using the ammonia provided by the HisH subunit. The protein is Imidazole glycerol phosphate synthase subunit HisF of Bacillus anthracis (strain CDC 684 / NRRL 3495).